Reading from the N-terminus, the 124-residue chain is Small ribosomal subunit protein uS12 (124 aa).

Residues 1–25 form a disordered region; sequence MARINQLVRKPRRARAKKSDVPALE. Aspartate 89 carries the post-translational modification 3-methylthioaspartic acid. Residues 103-124 form a disordered region; it reads DTAGVSGRRRGRSKYGEKKPKE.

This sequence belongs to the universal ribosomal protein uS12 family. Part of the 30S ribosomal subunit. Contacts proteins S8 and S17. May interact with IF1 in the 30S initiation complex.

Its function is as follows. With S4 and S5 plays an important role in translational accuracy. In terms of biological role, interacts with and stabilizes bases of the 16S rRNA that are involved in tRNA selection in the A site and with the mRNA backbone. Located at the interface of the 30S and 50S subunits, it traverses the body of the 30S subunit contacting proteins on the other side and probably holding the rRNA structure together. The combined cluster of proteins S8, S12 and S17 appears to hold together the shoulder and platform of the 30S subunit. This is Small ribosomal subunit protein uS12 from Coxiella burnetii (strain Dugway 5J108-111).